Consider the following 235-residue polypeptide: Uridylate kinase (235 aa).

9–12 (KLSG) is a binding site for ATP. Residues 17–22 (GNQGYG) form an involved in allosteric activation by GTP region. UMP is bound at residue G51. G52 and R56 together coordinate ATP. UMP-binding positions include D71 and 132–139 (CGNPFFTT). Positions 159, 165, and 168 each coordinate ATP.

The protein belongs to the UMP kinase family. As to quaternary structure, homohexamer.

The protein resides in the cytoplasm. It carries out the reaction UMP + ATP = UDP + ADP. It functions in the pathway pyrimidine metabolism; CTP biosynthesis via de novo pathway; UDP from UMP (UMPK route): step 1/1. Allosterically activated by GTP. Inhibited by UTP. Catalyzes the reversible phosphorylation of UMP to UDP. The protein is Uridylate kinase of Synechococcus sp. (strain CC9311).